Reading from the N-terminus, the 124-residue chain is Fluoride-specific ion channel FluC (124 aa).

Helical transmembrane passes span 4–24 (FVLVATGGIFGSLARYVLSGV), 35–55 (YGTVLVNLLGSLLFGLVWGIL), 67–87 (LLLLTGFMGSLTTFSTLTYEG), and 100–120 (ALYIVGQTVAGIMLVWFGAGL). G75 and T78 together coordinate Na(+).

The protein belongs to the fluoride channel Fluc/FEX (TC 1.A.43) family.

Its subcellular location is the cell inner membrane. It catalyses the reaction fluoride(in) = fluoride(out). Its activity is regulated as follows. Na(+) is not transported, but it plays an essential structural role and its presence is essential for fluoride channel function. In terms of biological role, fluoride-specific ion channel. Important for reducing fluoride concentration in the cell, thus reducing its toxicity. This chain is Fluoride-specific ion channel FluC, found in Nitratidesulfovibrio vulgaris (strain ATCC 29579 / DSM 644 / CCUG 34227 / NCIMB 8303 / VKM B-1760 / Hildenborough) (Desulfovibrio vulgaris).